The chain runs to 333 residues: Glyceraldehyde-3-phosphate dehydrogenase 1 (333 aa).

Residues 12 to 13 (RI), Asp35, and Arg79 each bind NAD(+). Residues 152 to 154 (SCT), Thr183, Arg198, 211 to 212 (SG), and Arg234 each bind D-glyceraldehyde 3-phosphate. Residue Cys153 is the Nucleophile of the active site. Asn314 lines the NAD(+) pocket.

The protein belongs to the glyceraldehyde-3-phosphate dehydrogenase family. Homotetramer.

It localises to the cytoplasm. It catalyses the reaction D-glyceraldehyde 3-phosphate + phosphate + NAD(+) = (2R)-3-phospho-glyceroyl phosphate + NADH + H(+). Its pathway is carbohydrate degradation; glycolysis; pyruvate from D-glyceraldehyde 3-phosphate: step 1/5. Its activity is regulated as follows. Resistant to pentalenolactone (PL). In terms of biological role, catalyzes the oxidative phosphorylation of glyceraldehyde 3-phosphate (G3P) to 1,3-bisphosphoglycerate (BPG) using the cofactor NAD. The first reaction step involves the formation of a hemiacetal intermediate between G3P and a cysteine residue, and this hemiacetal intermediate is then oxidized to a thioester, with concomitant reduction of NAD to NADH. The reduced NADH is then exchanged with the second NAD, and the thioester is attacked by a nucleophilic inorganic phosphate to produce BPG. This is Glyceraldehyde-3-phosphate dehydrogenase 1 (gap1) from Streptomyces arenae.